The primary structure comprises 978 residues: Transcription factor MYCGRDRAFT_87993 (978 aa).

2 C2H2-type zinc fingers span residues 2 to 24 (VFCT…ILTH) and 30 to 52 (FKCF…YTVH). The zn(2)-C6 fungal-type DNA-binding region spans 79–105 (CSNCAKTKTKCDKKFPCSRCAGRNLRC). Disordered regions lie at residues 113-231 (ASKN…SPRF) and 426-445 (THRE…PSGA). Positions 152–165 (SSSPSSQKSGTPIS) are enriched in low complexity. Positions 432–445 (GTSNGSHSPNPSGA) are enriched in polar residues.

It localises to the nucleus. Functionally, transcription factor; part of the gene cluster 29 that mediates the biosynthesis of dihydroxynaphthalene (DHN)-melanin, a bluish-green pigment forming a dark layer in the conidial wall that protects the conidia from UV radiations. The sequence is that of Transcription factor MYCGRDRAFT_87993 from Zymoseptoria tritici (strain CBS 115943 / IPO323) (Speckled leaf blotch fungus).